Reading from the N-terminus, the 98-residue chain is Citrate lyase acyl carrier protein (98 aa).

Serine 14 carries the post-translational modification O-(phosphoribosyl dephospho-coenzyme A)serine.

The protein belongs to the CitD family. As to quaternary structure, oligomer with a subunit composition of (alpha,beta,gamma)6.

It localises to the cytoplasm. Its function is as follows. Covalent carrier of the coenzyme of citrate lyase. This chain is Citrate lyase acyl carrier protein, found in Citrobacter koseri (strain ATCC BAA-895 / CDC 4225-83 / SGSC4696).